A 355-amino-acid polypeptide reads, in one-letter code: D-alanine--D-alanine ligase (355 aa).

One can recognise an ATP-grasp domain in the interval 143-350; it reads KQIFSNLSIP…IDQLVAKLID (208 aa). 178-233 serves as a coordination point for ATP; that stretch reads IEKLNLPVFVKPANSGSSLGISKAKNKSEIIKALQKAWEIDSRIVIEEGLNVRELE. Mg(2+) is bound by residues aspartate 303, glutamate 317, and asparagine 319.

It belongs to the D-alanine--D-alanine ligase family. Mg(2+) is required as a cofactor. Mn(2+) serves as cofactor.

It is found in the cytoplasm. It carries out the reaction 2 D-alanine + ATP = D-alanyl-D-alanine + ADP + phosphate + H(+). It participates in cell wall biogenesis; peptidoglycan biosynthesis. In terms of biological role, cell wall formation. The protein is D-alanine--D-alanine ligase of Prochlorococcus marinus (strain MIT 9515).